Reading from the N-terminus, the 595-residue chain is Elongation factor 4 2 (595 aa).

One can recognise a tr-type G domain in the interval serine 4–glutamine 187. Residues aspartate 16 to threonine 21 and asparagine 133 to aspartate 136 each bind GTP.

This sequence belongs to the TRAFAC class translation factor GTPase superfamily. Classic translation factor GTPase family. LepA subfamily.

It is found in the cell membrane. The enzyme catalyses GTP + H2O = GDP + phosphate + H(+). Required for accurate and efficient protein synthesis under certain stress conditions. May act as a fidelity factor of the translation reaction, by catalyzing a one-codon backward translocation of tRNAs on improperly translocated ribosomes. Back-translocation proceeds from a post-translocation (POST) complex to a pre-translocation (PRE) complex, thus giving elongation factor G a second chance to translocate the tRNAs correctly. Binds to ribosomes in a GTP-dependent manner. The chain is Elongation factor 4 2 from Lactiplantibacillus plantarum (strain ATCC BAA-793 / NCIMB 8826 / WCFS1) (Lactobacillus plantarum).